A 351-amino-acid chain; its full sequence is MVVSADPLSSERAEMNILEINQELRSQLAESNQQFRDLKEKFLITQATAYSLANQLKKYKCEEYKDIIDSVLRDELQSMEKLAEKLRQAEELRQYKALVHSQAKELTQLREKLREGRDASRWLNKHLKTLLTPDDPDKSQGQDLREQLAEGHRLAEHLVHKLSPENDEDEDEDEDDKDEEVEKVQESPAPREVQKTEEKEVPQDSLEECAVTCSNSHNPSNSNQPHRSTKITFKEHEVDSALVVESEHPHDEEEEALNIPPENQNDHEEEEGKAPVPPRHHDKSNSYRHREVSFLALDEQKVCSAQDVARDYSNPKWDETSLGFLDTPLARRESVALKGRTRSWQHSSHAN.

Coiled-coil stretches lie at residues Ser10 to Leu43 and Asp69 to Glu115. The segment at His157–Asn285 is disordered. Residues Glu165–Glu179 show a composition bias toward acidic residues. In terms of domain architecture, Olduvai spans Glu174 to Pro261. The segment covering Glu192 to Pro202 has biased composition (basic and acidic residues). A compositionally biased stretch (low complexity) spans Ser214–His226. Composition is skewed to basic and acidic residues over residues Thr232 to Asp251 and Gln264 to Lys273.

This sequence belongs to the NBPF family. As to expression, expressed in brain and medulla.

Its subcellular location is the cytoplasm. In Homo sapiens (Human), this protein is Putative NBPF family member NBPF5.